We begin with the raw amino-acid sequence, 330 residues long: Aspartate--ammonia ligase (330 aa).

Belongs to the class-II aminoacyl-tRNA synthetase family. AsnA subfamily.

The protein resides in the cytoplasm. The catalysed reaction is L-aspartate + NH4(+) + ATP = L-asparagine + AMP + diphosphate + H(+). Its pathway is amino-acid biosynthesis; L-asparagine biosynthesis; L-asparagine from L-aspartate (ammonia route): step 1/1. The protein is Aspartate--ammonia ligase of Escherichia coli O139:H28 (strain E24377A / ETEC).